A 215-amino-acid chain; its full sequence is Pyrrolidone-carboxylate peptidase (215 aa).

Catalysis depends on residues glutamate 80, cysteine 143, and histidine 167.

Belongs to the peptidase C15 family. Homotetramer.

The protein localises to the cytoplasm. The catalysed reaction is Release of an N-terminal pyroglutamyl group from a polypeptide, the second amino acid generally not being Pro.. In terms of biological role, removes 5-oxoproline from various penultimate amino acid residues except L-proline. The protein is Pyrrolidone-carboxylate peptidase of Bacillus cereus (strain AH820).